A 404-amino-acid chain; its full sequence is Serine/threonine transporter SstT (404 aa).

The next 9 membrane-spanning stretches (helical) occupy residues 12-32 (GGNLVLRIAIGLVLGACLALV), 53-73 (AIAPILVFVLVLSAIANKEVG), 81-101 (ILVMYVLGTFVAALTAVVLSF), 140-160 (ALANANFIGILAWAIGLGIAL), 177-197 (AVSFVVKVVIAFAPIGVFGLV), 216-236 (LGVLLGAMVIVAFVLNPLIVF), 287-307 (VAIPLGATINMAGAAITVTVL), 329-349 (IVASVCACGASGVAGGSLLLI), and 356-376 (FNIPNDIAAQVIGVGFIIGVI).

It belongs to the dicarboxylate/amino acid:cation symporter (DAACS) (TC 2.A.23) family.

Its subcellular location is the cell inner membrane. It carries out the reaction L-serine(in) + Na(+)(in) = L-serine(out) + Na(+)(out). The catalysed reaction is L-threonine(in) + Na(+)(in) = L-threonine(out) + Na(+)(out). In terms of biological role, involved in the import of serine and threonine into the cell, with the concomitant import of sodium (symport system). The polypeptide is Serine/threonine transporter SstT (Actinobacillus pleuropneumoniae serotype 7 (strain AP76)).